The primary structure comprises 359 residues: Peptide chain release factor 1 (359 aa).

Q236 is subject to N5-methylglutamine.

It belongs to the prokaryotic/mitochondrial release factor family. Methylated by PrmC. Methylation increases the termination efficiency of RF1.

The protein localises to the cytoplasm. Functionally, peptide chain release factor 1 directs the termination of translation in response to the peptide chain termination codons UAG and UAA. The sequence is that of Peptide chain release factor 1 from Streptococcus pneumoniae serotype 4 (strain ATCC BAA-334 / TIGR4).